We begin with the raw amino-acid sequence, 297 residues long: tRNA dimethylallyltransferase (297 aa).

An ATP-binding site is contributed by 15–22 (GPTASGKS). A substrate-binding site is contributed by 17–22 (TASGKS). Interaction with substrate tRNA regions lie at residues 40-43 (DSMQ) and 164-168 (QRIVR).

It belongs to the IPP transferase family. As to quaternary structure, monomer. Mg(2+) is required as a cofactor.

It catalyses the reaction adenosine(37) in tRNA + dimethylallyl diphosphate = N(6)-dimethylallyladenosine(37) in tRNA + diphosphate. In terms of biological role, catalyzes the transfer of a dimethylallyl group onto the adenine at position 37 in tRNAs that read codons beginning with uridine, leading to the formation of N6-(dimethylallyl)adenosine (i(6)A). The polypeptide is tRNA dimethylallyltransferase (Rhizobium johnstonii (strain DSM 114642 / LMG 32736 / 3841) (Rhizobium leguminosarum bv. viciae)).